The sequence spans 394 residues: Phosphorylated adapter RNA export protein (394 aa).

The segment covering 1 to 18 (MALEVGDMEDGQLSDSDS) has biased composition (acidic residues). The tract at residues 1–33 (MALEVGDMEDGQLSDSDSDMTVAPSDRPLQLPK) is disordered. Ala-2 bears the N-acetylalanine mark. Residues 2-329 (ALEVGDMEDG…KAARKRRTQV (328 aa)) form a necessary for interaction with CBP80 region. Phosphoserine occurs at positions 14, 16, 65, 66, 69, and 73. The Nuclear localization signal motif lies at 81-84 (KRKR). Residues 83–111 (KRQKCFNPPPKPEPFQFGQSSQKPPVAGG) are disordered. The Nuclear export signal motif lies at 130-139 (VATELGILGM). Over residues 183–193 (KKMGSKEEENG) the composition is skewed to basic and acidic residues. Residues 183 to 211 (KKMGSKEEENGQGHLKRKRPVKDRLGNRP) form a disordered region. The Nuclear localization signal signature appears at 198 to 201 (KRKR). At Ser-226 the chain carries Phosphoserine. Residues 228-328 (EKVADEISFR…KKAARKRRTQ (101 aa)) are sufficient for poly U RNA-binding. Residues 279–287 (GSRRRTPGG) form a necessary for poly U RNA-binding and snRNA export region. The residue at position 296 (Thr-296) is a Phosphothreonine. Ser-356 and Ser-368 each carry phosphoserine.

It belongs to the PHAX family. Found in a U snRNA export complex with PHAX/RNUXA, NCBP1/CBP80, NCBP2/CBP20, RAN, XPO1 and m7G-capped RNA. Part of a precomplex with PHAX/RNUXA, NCBP1/CBP80, NCBP2/CBP20 and m7G-capped RNA. Interacts with NCBP1/CBP80. Found in a complex with snoRNA. Interacts with NCBP2/CBP20. Interacts with DDX39A; this interaction stimulates PHAX RNA binding activity. Phosphorylated in the nucleus. Dephosphorylated in the cytoplasm.

The protein resides in the nucleus. The protein localises to the nucleoplasm. Its subcellular location is the cajal body. It localises to the cytoplasm. Its function is as follows. A phosphoprotein adapter involved in the XPO1-mediated U snRNA export from the nucleus. Bridge components required for U snRNA export, the cap binding complex (CBC)-bound snRNA on the one hand and the GTPase Ran in its active GTP-bound form together with the export receptor XPO1 on the other. Its phosphorylation in the nucleus is required for U snRNA export complex assembly and export, while its dephosphorylation in the cytoplasm causes export complex disassembly. It is recycled back to the nucleus via the importin alpha/beta heterodimeric import receptor. The directionality of nuclear export is thought to be conferred by an asymmetric distribution of the GTP- and GDP-bound forms of Ran between the cytoplasm and nucleus. Its compartmentalized phosphorylation cycle may also contribute to the directionality of export. Binds strongly to m7G-capped U1 and U5 small nuclear RNAs (snRNAs) in a sequence-unspecific manner and phosphorylation-independent manner. Also plays a role in the biogenesis of U3 small nucleolar RNA (snoRNA). Involved in the U3 snoRNA transport from nucleoplasm to Cajal bodies. Binds strongly to m7G-capped U3, U8 and U13 precursor snoRNAs and weakly to trimethylated (TMG)-capped U3, U8 and U13 snoRNAs. Also binds to telomerase RNA. This is Phosphorylated adapter RNA export protein (PHAX) from Homo sapiens (Human).